The primary structure comprises 336 residues: Small ribosomal subunit protein uS2 (336 aa).

It belongs to the universal ribosomal protein uS2 family.

The sequence is that of Small ribosomal subunit protein uS2 from Beijerinckia indica subsp. indica (strain ATCC 9039 / DSM 1715 / NCIMB 8712).